Consider the following 256-residue polypeptide: uncharacterized protein (256 aa).

2 disordered regions span residues 1 to 171 (MARG…QLKH) and 185 to 256 (NGQR…LYND). Residues 14-39 (KRRSKVQEEEEHVEGSEEEVEEPEQK) adopt a coiled-coil conformation. Composition is skewed to acidic residues over residues 21–35 (EEEE…EVEE) and 64–92 (SDDD…DNDE). Positions 108-129 (NRGDHESHDDNSDNEEQGDRGN) are enriched in basic and acidic residues. Positions 192 to 205 (KRGGPPRGSFGQRG) are enriched in gly residues. The span at 219-234 (RQGDTRDTRDTRDTRL) shows a compositional bias: basic and acidic residues.

This is an uncharacterized protein from Acanthamoeba polyphaga (Amoeba).